A 126-amino-acid polypeptide reads, in one-letter code: Ribosome-binding factor A (126 aa).

It belongs to the RbfA family. As to quaternary structure, monomer. Binds 30S ribosomal subunits, but not 50S ribosomal subunits or 70S ribosomes.

Its subcellular location is the cytoplasm. One of several proteins that assist in the late maturation steps of the functional core of the 30S ribosomal subunit. Associates with free 30S ribosomal subunits (but not with 30S subunits that are part of 70S ribosomes or polysomes). Required for efficient processing of 16S rRNA. May interact with the 5'-terminal helix region of 16S rRNA. The sequence is that of Ribosome-binding factor A from Thermosipho africanus (strain TCF52B).